The following is a 166-amino-acid chain: 2-C-methyl-D-erythritol 2,4-cyclodiphosphate synthase (166 aa).

The a divalent metal cation site is built by aspartate 12 and histidine 14. 4-CDP-2-C-methyl-D-erythritol 2-phosphate is bound by residues 12-14 (DSH) and 38-39 (HS). Histidine 46 contributes to the a divalent metal cation binding site. 4-CDP-2-C-methyl-D-erythritol 2-phosphate contacts are provided by residues 60-62 (DIG), 65-69 (FPDTD), and arginine 146.

It belongs to the IspF family. In terms of assembly, homotrimer. A divalent metal cation is required as a cofactor.

It carries out the reaction 4-CDP-2-C-methyl-D-erythritol 2-phosphate = 2-C-methyl-D-erythritol 2,4-cyclic diphosphate + CMP. It functions in the pathway isoprenoid biosynthesis; isopentenyl diphosphate biosynthesis via DXP pathway; isopentenyl diphosphate from 1-deoxy-D-xylulose 5-phosphate: step 4/6. Its function is as follows. Involved in the biosynthesis of isopentenyl diphosphate (IPP) and dimethylallyl diphosphate (DMAPP), two major building blocks of isoprenoid compounds. Catalyzes the conversion of 4-diphosphocytidyl-2-C-methyl-D-erythritol 2-phosphate (CDP-ME2P) to 2-C-methyl-D-erythritol 2,4-cyclodiphosphate (ME-CPP) with a corresponding release of cytidine 5-monophosphate (CMP). This chain is 2-C-methyl-D-erythritol 2,4-cyclodiphosphate synthase, found in Gemmatimonas aurantiaca (strain DSM 14586 / JCM 11422 / NBRC 100505 / T-27).